Here is a 258-residue protein sequence, read N- to C-terminus: MASFGWKRKIGEKVSKEVSQHFEEEAADESVVLDSHDVDWLHAIKRKKDVLLEDNVAKSKRLKEEGGLLAEDGRQKEALTKWDEAIQLTPGDAALYEMKAQVLMGVHEIFPAVQAAETAVQRNPHFVEAWQTLGRAQLSLGEITMAIRSFQIGLHICPANTELWEQDLNWARQLLLQKMDTESAERKRRDVNITREQIPDYDFESDEVVAACDAISQKQKMAAANKTVVVSASGSENLSDRKEDKVETNDSKEFIKAR.

TPR repeat units follow at residues 59-92 (SKRL…TPGD), 93-126 (AALY…NPHF), and 127-160 (VEAW…CPAN). A disordered region spans residues 231–258 (SASGSENLSDRKEDKVETNDSKEFIKAR). The span at 238 to 258 (LSDRKEDKVETNDSKEFIKAR) shows a compositional bias: basic and acidic residues.

In Xenopus laevis (African clawed frog), this protein is Tetratricopeptide repeat protein 33 (ttc33).